We begin with the raw amino-acid sequence, 321 residues long: MASSSFSIVVVALGVLALFAGSSSAQLSTNFYSKTCPKVFDTVKSGVQSAVSKERRMGASLLRLFFHDCFVNGCDASVLLDDTSSFTGEQTAVPNKNSIRGLNVIDNIKSQVESVCPGVVSCADIIAIAARDSVVILGGPDWDVKLGRRDSKTASLSGANNNIPPPTSSLSNLISKFQAQGLSTRDMVALSGAHTIGQARCTSFRARIYNETNIDSSFAKTRQASCPSASGSGDNNLAPLDLQTPTTFDNYYYKNLINQKGLLHSDQVLYNGGSTDSTVKTYVNNPKTFTSDFVAGMIKMGDITPLTGSEGEIRKSCGKVN.

The first 25 residues, 1 to 25, serve as a signal peptide directing secretion; that stretch reads MASSSFSIVVVALGVLALFAGSSSA. Residue glutamine 26 is modified to Pyrrolidone carboxylic acid. Disulfide bonds link cysteine 36–cysteine 116, cysteine 69–cysteine 74, cysteine 122–cysteine 317, and cysteine 201–cysteine 226. The active-site Proton acceptor is histidine 67. Ca(2+) is bound by residues aspartate 68, valine 71, glycine 73, aspartate 75, and serine 77. Proline 164 contributes to the substrate binding site. Histidine 194 contacts heme b. Residue threonine 195 participates in Ca(2+) binding. Asparagine 210 is a glycosylation site (N-linked (GlcNAc...) asparagine). The Ca(2+) site is built by aspartate 241, threonine 244, and aspartate 249.

The protein belongs to the peroxidase family. Classical plant (class III) peroxidase subfamily. It depends on heme b as a cofactor. Ca(2+) is required as a cofactor.

It localises to the secreted. The enzyme catalyses 2 a phenolic donor + H2O2 = 2 a phenolic radical donor + 2 H2O. Removal of H(2)O(2), oxidation of toxic reductants, biosynthesis and degradation of lignin, suberization, auxin catabolism, response to environmental stresses such as wounding, pathogen attack and oxidative stress. These functions might be dependent on each isozyme/isoform in each plant tissue. This is Peroxidase 4 from Vitis vinifera (Grape).